The primary structure comprises 856 residues: 3-hydroxy-3-methylglutaryl-coenzyme A reductase (856 aa).

4 consecutive transmembrane segments (helical) span residues 12–32 (FCASHPWEVIVATLTLTVCML), 89–109 (ILGIAGLFTVFSSFVFSSSVI), 123–143 (LFFFLLLIDLSKATVLAQFAL), and 190–210 (VLCCFACMSVIVNYVVFMTFY). Asparagine 326 carries an N-linked (GlcNAc...) asparagine glycan. The chain crosses the membrane as a helical span at residues 344 to 364 (SADHIVILILLLALAVKFVFF). Positions 365–443 (ETRDELTTTR…CEVMALVTSG (79 aa)) are linker. The N-linked (GlcNAc...) asparagine glycan is linked to asparagine 412. The catalytic stretch occupies residues 443–771 (GHIAGYQLEK…SCTMPSIEIG (329 aa)). Residues glutamate 528 and lysine 659 each act as charge relay system in the active site. Residue asparagine 700 is glycosylated (N-linked (GlcNAc...) asparagine). Aspartate 735 acts as the Charge relay system in catalysis. Catalysis depends on histidine 834, which acts as the Proton donor. Residues 836–856 (RHNRSSVSTSGSEPSTPACKS) form a disordered region. Asparagine 838 carries an N-linked (GlcNAc...) asparagine glycan. The span at 840–856 (SSVSTSGSEPSTPACKS) shows a compositional bias: low complexity.

The protein belongs to the HMG-CoA reductase family.

The protein localises to the endoplasmic reticulum membrane. The enzyme catalyses (R)-mevalonate + 2 NADP(+) + CoA = (3S)-3-hydroxy-3-methylglutaryl-CoA + 2 NADPH + 2 H(+). The protein operates within metabolic intermediate biosynthesis; (R)-mevalonate biosynthesis; (R)-mevalonate from acetyl-CoA: step 3/3. With respect to regulation, the activity of HMG-CoA-reductase is suppressed by exogenous mevalonate. Synthesis of mevalonate for the production of non-sterol isoprenoids, which are essential for growth differentiation. The chain is 3-hydroxy-3-methylglutaryl-coenzyme A reductase from Blattella germanica (German cockroach).